A 229-amino-acid polypeptide reads, in one-letter code: Large ribosomal subunit protein uL1 (229 aa).

Belongs to the universal ribosomal protein uL1 family. As to quaternary structure, part of the 50S ribosomal subunit.

In terms of biological role, binds directly to 23S rRNA. The L1 stalk is quite mobile in the ribosome, and is involved in E site tRNA release. Functionally, protein L1 is also a translational repressor protein, it controls the translation of the L11 operon by binding to its mRNA. The chain is Large ribosomal subunit protein uL1 from Clostridium kluyveri (strain ATCC 8527 / DSM 555 / NBRC 12016 / NCIMB 10680 / K1).